The primary structure comprises 115 residues: Large ribosomal subunit protein uL18 (115 aa).

The protein belongs to the universal ribosomal protein uL18 family. In terms of assembly, part of the 50S ribosomal subunit; part of the 5S rRNA/L5/L18/L25 subcomplex. Contacts the 5S and 23S rRNAs.

Its function is as follows. This is one of the proteins that bind and probably mediate the attachment of the 5S RNA into the large ribosomal subunit, where it forms part of the central protuberance. This Rickettsia rickettsii (strain Iowa) protein is Large ribosomal subunit protein uL18.